Reading from the N-terminus, the 318-residue chain is uncharacterized protein (318 aa).

The protein belongs to the glycosyltransferase 2 family.

This is an uncharacterized protein from Rickettsia typhi (strain ATCC VR-144 / Wilmington).